The sequence spans 952 residues: Bromodomain testis-specific protein (952 aa).

The region spanning 26–132 is the Bromo 1 domain; the sequence is RLTNQLQFLQ…KLFMQKLSQM (107 aa). Over residues 141–150 the composition is skewed to basic and acidic residues; the sequence is GKERMKKDIQ. The interval 141-168 is disordered; it reads GKERMKKDIQQKTAVSSAKEQTPSKSAE. The span at 151 to 167 shows a compositional bias: polar residues; that stretch reads QKTAVSSAKEQTPSKSA. Ser-186 is subject to Phosphoserine. A Nuclear localization signal motif is present at residues 208-219; sequence KGVKRRADTTTP. Positions 209–257 are disordered; that stretch reads GVKRRADTTTPTTSSAKASSESPPPLREAKPANAPVKENTVKSVLPDSQ. Over residues 216–229 the composition is skewed to low complexity; it reads TTTPTTSSAKASSE. One can recognise a Bromo 2 domain in the interval 266-375; the sequence is VKVTEQLKHC…DVFEMHFAKI (110 aa). 4 disordered regions span residues 392-420, 442-504, 607-746, and 850-930; these read SAKALSRESSSEASSGDCSSEDSEDERVQ, VPLR…NAKP, QLNC…GCQV, and KHLE…RREA. Residues 417–442 are a coiled coil; the sequence is ERVQRLAKLQEQLNAVHQQLQVLSQV. Basic residues predominate over residues 445-463; sequence RKLKKKNEKSKRAPKRKKV. One can recognise an NET domain in the interval 495–577; the sequence is KLEEEDNAKP…ACLRKRSLKP (83 aa). Residues 610 to 619 show a composition bias toward basic residues; sequence CRKRQTKRPA. The segment covering 625 to 638 has biased composition (pro residues); sequence PRPPLPPPPPPPPE. Over residues 646–681 the composition is skewed to low complexity; sequence SDSSSSSSSSGSGSSSSSSSSSGSGSSSSDSSSSDS. Residues 718–729 are compositionally biased toward polar residues; sequence SAETALVQQSTG. Residues 837 to 936 are a coiled coil; that stretch reads EKEVKARTQE…RREAMAGTID (100 aa). Basic and acidic residues predominate over residues 850 to 867; it reads KHLEHSAKDPKVSQESQR. Over residues 874–883 the composition is skewed to polar residues; that stretch reads TPESSSNKVQ. A compositionally biased stretch (low complexity) spans 893 to 902; sequence EQQQLPSPSE. Residues 911-930 show a composition bias toward basic and acidic residues; it reads LLKDRNLAREKEQERRRREA.

The protein belongs to the BET family. As to quaternary structure, interacts with the acetylated N-terminus of histone H1, H2, H3 and H4. Interacts with P-TEFb components CDK9 and CCNT1/cyclin-T1. Interacts with mRNA splicing machinery proteins SRSF2, DDX5, HNRNPK and TARDBP. Interacts with SMARCE1. In terms of processing, ubiquitinated in a SPOP-dependent manner, leading to proteasomal degradation.

It is found in the nucleus. Testis-specific chromatin protein that specifically binds histone H4 acetylated at 'Lys-5' and 'Lys-8' (H4K5ac and H4K8ac, respectively) and plays a key role in spermatogenesis. Required in late pachytene spermatocytes: plays a role in meiotic and post-meiotic cells by binding to acetylated histones at the promoter of specific meiotic and post-meiotic genes, facilitating their activation at the appropriate time. In the post-meiotic phase of spermatogenesis, binds to hyperacetylated histones and participates in their general removal from DNA. Also recognizes and binds a subset of butyrylated histones: able to bind histone H4 butyrylated at 'Lys-8' (H4K8ac), while it is not able to bind H4 butyrylated at 'Lys-5' (H4K5ac). Also acts as a component of the splicing machinery in pachytene spermatocytes and round spermatids and participates in 3'-UTR truncation of specific mRNAs in post-meiotic spermatids. Required for chromocenter organization, a structure comprised of peri-centromeric heterochromatin. The chain is Bromodomain testis-specific protein (Brdt) from Rattus norvegicus (Rat).